The primary structure comprises 66 residues: Opicalcin-1 (66 aa).

The N-terminal stretch at 1–22 (MKPSLIIVTFIVVFMAISCVAA) is a signal peptide. A propeptide spanning residues 23–31 (DDEQETWIE) is cleaved from the precursor. Intrachain disulfides connect Cys-36–Cys-50, Cys-43–Cys-54, and Cys-49–Cys-65. Residues 55-57 (KRR) are essential for stimulation of [3H]ryanodine binding to RYR1.

Belongs to the scorpion calcin family. As to expression, expressed by the venom gland.

The protein localises to the secreted. Its function is as follows. This toxin stabilizes ryanodine receptor 1 (RyR1) opening in a long-lasting subconductance state (35% of the full conductance state). Furthermore, it triggers calcium release from sarcoplasmic vesicles (2 nM are enough to induce a sharp release, and 67% of the total calcium is released after toxin (100 nM) addition) probably by acting as a cell-penetrating peptide (CPP). In addition, it has been shown to dose-dependently stimulate ryanodine binding to RyR1 (EC(50)=0.3 nM). It also augments the bell-shaped calcium-[3H]ryanodine binding curve that is maximal at about 10 uM calcium concentration. It binds a different site as ryanodine. It acts synergistically with caffeine. In vivo, intracerebroventricular injection into mice induces neurotoxic symptoms, followed by death. The sequence is that of Opicalcin-1 from Opistophthalmus carinatus (African yellow leg scorpion).